Consider the following 174-residue polypeptide: Major allergen Can f 1 (174 aa).

The N-terminal stretch at 1–18 (MKTLLLTIGFSLIAILQA) is a signal peptide. A disulfide bond links C78 and C169. An N-linked (GlcNAc...) asparagine glycan is attached at N80.

The protein belongs to the calycin superfamily. Lipocalin family. As to expression, tongue epithelial tissue.

It is found in the secreted. This Canis lupus familiaris (Dog) protein is Major allergen Can f 1.